The chain runs to 202 residues: Probable ATP-dependent Clp protease proteolytic subunit 3 (202 aa).

The active-site Nucleophile is S101. The active site involves H126.

Belongs to the peptidase S14 family. Fourteen ClpP subunits assemble into 2 heptameric rings which stack back to back to give a disk-like structure with a central cavity, resembling the structure of eukaryotic proteasomes.

The protein localises to the cytoplasm. The enzyme catalyses Hydrolysis of proteins to small peptides in the presence of ATP and magnesium. alpha-casein is the usual test substrate. In the absence of ATP, only oligopeptides shorter than five residues are hydrolyzed (such as succinyl-Leu-Tyr-|-NHMec, and Leu-Tyr-Leu-|-Tyr-Trp, in which cleavage of the -Tyr-|-Leu- and -Tyr-|-Trp bonds also occurs).. In terms of biological role, cleaves peptides in various proteins in a process that requires ATP hydrolysis. Has a chymotrypsin-like activity. Plays a major role in the degradation of misfolded proteins. This is Probable ATP-dependent Clp protease proteolytic subunit 3 from Synechocystis sp. (strain ATCC 27184 / PCC 6803 / Kazusa).